Here is a 199-residue protein sequence, read N- to C-terminus: Recombination protein RecR (199 aa).

The C4-type zinc finger occupies 58–73 (CKKCFNLTSEDECEIC). The Toprim domain maps to 81-175 (KLICVVAETK…KVTRIAYGLP (95 aa)).

It belongs to the RecR family.

May play a role in DNA repair. It seems to be involved in an RecBC-independent recombinational process of DNA repair. It may act with RecF and RecO. The sequence is that of Recombination protein RecR from Prochlorococcus marinus (strain MIT 9301).